Consider the following 1316-residue polypeptide: DNA-directed RNA polymerase subunit beta' (1316 aa).

4 residues coordinate Zn(2+): C60, C62, C75, and C78. Mg(2+) contacts are provided by D535, D537, and D539. Zn(2+) is bound by residues C891, C968, C975, and C978.

The protein belongs to the RNA polymerase beta' chain family. In terms of assembly, the RNAP catalytic core consists of 2 alpha, 1 beta, 1 beta' and 1 omega subunit. When a sigma factor is associated with the core the holoenzyme is formed, which can initiate transcription. It depends on Mg(2+) as a cofactor. The cofactor is Zn(2+).

It carries out the reaction RNA(n) + a ribonucleoside 5'-triphosphate = RNA(n+1) + diphosphate. DNA-dependent RNA polymerase catalyzes the transcription of DNA into RNA using the four ribonucleoside triphosphates as substrates. The chain is DNA-directed RNA polymerase subunit beta' from Mycobacterium tuberculosis (strain ATCC 25177 / H37Ra).